The chain runs to 105 residues: Cell division protein FtsB (105 aa).

At 1–3 (MGK) the chain is on the cytoplasmic side. Residues 4-21 (LTLLLLALLVWLQYSLWF) traverse the membrane as a helical segment. Topologically, residues 22 to 105 (GKNGLHDYTR…QASGQQQNNR (84 aa)) are periplasmic. Residues 33–62 (NDDVTAQQATNAKLKARNDQLFAEIDDLNG) are a coiled coil.

The protein belongs to the FtsB family. In terms of assembly, part of a complex composed of FtsB, FtsL and FtsQ.

It is found in the cell inner membrane. In terms of biological role, essential cell division protein. May link together the upstream cell division proteins, which are predominantly cytoplasmic, with the downstream cell division proteins, which are predominantly periplasmic. The sequence is that of Cell division protein FtsB from Klebsiella aerogenes (Enterobacter aerogenes).